Consider the following 71-residue polypeptide: Large ribosomal subunit protein bL31 (71 aa).

4 residues coordinate Zn(2+): Cys-16, Cys-18, Cys-37, and Cys-40.

The protein belongs to the bacterial ribosomal protein bL31 family. Type A subfamily. As to quaternary structure, part of the 50S ribosomal subunit. Zn(2+) is required as a cofactor.

Binds the 23S rRNA. The chain is Large ribosomal subunit protein bL31 from Chromohalobacter salexigens (strain ATCC BAA-138 / DSM 3043 / CIP 106854 / NCIMB 13768 / 1H11).